Consider the following 218-residue polypeptide: MTMSDLRRRGLLIILSSPSGAGKSTLARRLMAWDETLSFSVSATTRQARPGEEDGVHYRFLPEAEFKSLVSSGQMLEHAHVFGNFYGSPMAPVSQAIEAGHDVLFDIDWQGAQQIRNSDLGKHTLSIFILPPSIPELKRRLESRAQDSDDVIEKRMRKSWDEISRWDAYDYVLVNDDLSVTEERLKTIITAERLRREQQPALQTHVRALQTEFEDLEQ.

In terms of domain architecture, Guanylate kinase-like spans Gly-10–Thr-190. An ATP-binding site is contributed by Ser-17 to Ser-24.

The protein belongs to the guanylate kinase family.

It localises to the cytoplasm. It carries out the reaction GMP + ATP = GDP + ADP. Its function is as follows. Essential for recycling GMP and indirectly, cGMP. The chain is Guanylate kinase from Jannaschia sp. (strain CCS1).